The chain runs to 286 residues: Digeranylgeranylglyceryl phosphate synthase (286 aa).

A run of 8 helical transmembrane segments spans residues 21 to 41, 42 to 62, 96 to 116, 133 to 155, 162 to 181, 214 to 234, 235 to 255, and 266 to 286; these read AVAA…FAVT, TAHV…GNAI, FLFV…IVLA, LPGV…GAAA, FGVV…REII, VLLV…FGIW, YLTL…QAPD, and RGMF…VAGI.

The protein belongs to the UbiA prenyltransferase family. DGGGP synthase subfamily. It depends on Mg(2+) as a cofactor.

It localises to the cell membrane. It carries out the reaction sn-3-O-(geranylgeranyl)glycerol 1-phosphate + (2E,6E,10E)-geranylgeranyl diphosphate = 2,3-bis-O-(geranylgeranyl)-sn-glycerol 1-phosphate + diphosphate. It participates in membrane lipid metabolism; glycerophospholipid metabolism. In terms of biological role, prenyltransferase that catalyzes the transfer of the geranylgeranyl moiety of geranylgeranyl diphosphate (GGPP) to the C2 hydroxyl of (S)-3-O-geranylgeranylglyceryl phosphate (GGGP). This reaction is the second ether-bond-formation step in the biosynthesis of archaeal membrane lipids. The sequence is that of Digeranylgeranylglyceryl phosphate synthase from Haloquadratum walsbyi (strain DSM 16790 / HBSQ001).